Here is a 44-residue protein sequence, read N- to C-terminus: uncharacterized protein (44 aa).

This is an uncharacterized protein from Bacillus subtilis (strain 168).